Consider the following 529-residue polypeptide: O-acetylstemmadenine oxidase (529 aa).

Positions 1–23 are cleaved as a signal peptide; it reads MIKKVPIVLSIFCFLLLLSSSHG. A disulfide bridge connects residues cysteine 32 and cysteine 92. Asparagine 52 carries N-linked (GlcNAc...) asparagine glycosylation. The FAD-binding PCMH-type domain occupies 70-244; sequence KSPKPLAIIT…VSWKVKLVKV (175 aa). FAD contacts are provided by residues 102 to 108, serine 113, 168 to 169, 173 to 177, and phenylalanine 183; these read IRSGGAD, VS, and GIGGH. Residue asparagine 293 is glycosylated (N-linked (GlcNAc...) asparagine). Tryptophan 465 is an FAD binding site.

This sequence belongs to the oxygen-dependent FAD-linked oxidoreductase family. FAD serves as cofactor. In terms of tissue distribution, expressed in leaf epidermis.

It is found in the endoplasmic reticulum. Its subcellular location is the vacuole. The protein resides in the vesicle. The enzyme catalyses O-acetyl-15alpha-stemmadenine + O2 = precondylocarpine acetate + H2O2. Its pathway is alkaloid biosynthesis. Its function is as follows. Component of the seco-iridoid and derivatives monoterpenoid indole alkaloids (MIAs, e.g. vinblastine, catharanthine, tabersonine, vincadifformine, vindoline, vincristine, quinine and strychnine) biosynthesis pathway. Converts O-acetylstemmadenine (OAS) to reactive acetylated intermediates, likely dihydroprecondylocarpine acetate. This chain is O-acetylstemmadenine oxidase, found in Catharanthus roseus (Madagascar periwinkle).